The chain runs to 733 residues: Oligopeptide transporter 8 (733 aa).

Helical transmembrane passes span 42–62 (MWVLGITACVLLSFLNQFFWY), 66–86 (PLTISSVSAQIAVVPIGHLMA), 115–135 (VLITVFANSGSGAVYATHILS), 147–167 (FLPALLVMITTQVLGFGWAGL), 209–229 (FFVITLITSFSYYLLPGYLFT), 244–264 (SILVNQLGSGSAGLGIGSFGL), 281–301 (FFASANIAAGFFLVMYVITPL), 357–377 (FAVTYGLGFATLSASIFHVLI), 413–433 (LWWFLSIFAVNLAVIVFICIY), 442–462 (WWGAFLACLIAIFFTPLVGVI), 531–551 (VGTLVAVIAYAGTAWWLMAEI), 596–616 (YSNINWFFVGGAIAPALVYLA), 644–664 (ASAVNFTSWLVMAFVFGHFVF), and 677–697 (VLSGGMDAGTGFMSVLLFLAL).

This sequence belongs to the oligopeptide OPT transporter (TC 2.A.67.1) family.

It is found in the membrane. Functionally, may be involved in the translocation of tetra- and pentapeptides across the cellular membrane in an energy-dependent manner. The polypeptide is Oligopeptide transporter 8 (OPT8) (Arabidopsis thaliana (Mouse-ear cress)).